We begin with the raw amino-acid sequence, 220 residues long: Iron-sulfur cluster repair protein YtfE (220 aa).

This sequence belongs to the RIC family. YtfE subfamily. As to quaternary structure, homodimer.

The protein resides in the cytoplasm. Di-iron-containing protein involved in the repair of iron-sulfur clusters damaged by oxidative and nitrosative stress conditions. In Salmonella paratyphi A (strain AKU_12601), this protein is Iron-sulfur cluster repair protein YtfE.